The following is a 452-amino-acid chain: Isocitrate dehydrogenase [NADP], mitochondrial (452 aa).

Residues 1–39 (MAGYLRAVSSLCRASGSTRTWAPAALNVPSWPEQPRRHY) constitute a mitochondrion transit peptide. Lysine 45, lysine 48, lysine 67, and lysine 69 each carry N6-acetyllysine. N6-acetyllysine; alternate occurs at positions 80 and 106. Residues lysine 80 and lysine 106 each carry the N6-succinyllysine; alternate modification. NADP(+) contacts are provided by residues 115-117 (TIT) and arginine 122. Threonine 117 serves as a coordination point for D-threo-isocitrate. D-threo-isocitrate is bound by residues 134-140 (SPNGTIR) and arginine 149. Lysine 155 carries the post-translational modification N6-acetyllysine. Residue lysine 166 is modified to N6-acetyllysine; alternate. Lysine 166 carries the post-translational modification N6-succinyllysine; alternate. Residue arginine 172 coordinates D-threo-isocitrate. 2 positions are modified to N6-acetyllysine; alternate: lysine 180 and lysine 193. An N6-succinyllysine; alternate mark is found at lysine 180 and lysine 193. Lysine 199 carries the post-translational modification N6-acetyllysine. An N6-acetyllysine; alternate modification is found at lysine 256. An N6-succinyllysine; alternate modification is found at lysine 256. N6-acetyllysine occurs at positions 263, 272, 275, and 280. Lysine 282 carries the post-translational modification N6-acetyllysine; alternate. Residue lysine 282 is modified to N6-succinyllysine; alternate. Aspartate 291 is a binding site for Mn(2+). Residue lysine 299 participates in NADP(+) binding. Aspartate 314 contributes to the Mn(2+) binding site. Residues 349–354 (GTVTRH) and asparagine 367 each bind NADP(+). The residue at position 384 (lysine 384) is an N6-acetyllysine; alternate. An N6-succinyllysine; alternate modification is found at lysine 384. N6-acetyllysine is present on residues lysine 400, lysine 413, and lysine 442.

The protein belongs to the isocitrate and isopropylmalate dehydrogenases family. Homodimer. The cofactor is Mg(2+). It depends on Mn(2+) as a cofactor. Post-translationally, acetylation at Lys-413 dramatically reduces catalytic activity. Deacetylated by SIRT3.

Its subcellular location is the mitochondrion. It catalyses the reaction D-threo-isocitrate + NADP(+) = 2-oxoglutarate + CO2 + NADPH. Plays a role in intermediary metabolism and energy production. It may tightly associate or interact with the pyruvate dehydrogenase complex. This chain is Isocitrate dehydrogenase [NADP], mitochondrial (Idh2), found in Rattus norvegicus (Rat).